The primary structure comprises 71 residues: Large ribosomal subunit protein bL31 (71 aa).

Residues Cys-16, Cys-18, Cys-37, and Cys-40 each coordinate Zn(2+).

This sequence belongs to the bacterial ribosomal protein bL31 family. Type A subfamily. In terms of assembly, part of the 50S ribosomal subunit. It depends on Zn(2+) as a cofactor.

In terms of biological role, binds the 23S rRNA. The polypeptide is Large ribosomal subunit protein bL31 (Pseudoalteromonas atlantica (strain T6c / ATCC BAA-1087)).